Consider the following 1271-residue polypeptide: Zinc finger transcription factor Trps1 (1271 aa).

Disordered stretches follow at residues 1-76 (MVRK…DSAS) and 124-155 (SPIK…DMSP). Residues 34 to 49 (SKEISTDPMQENSEQS) are compositionally biased toward polar residues. Basic and acidic residues predominate over residues 54-65 (HNSDDHSFHDQE). Polar residues predominate over residues 66-76 (PSSSINKDSAS). The segment at 217-242 (FKCNICGYGYYGNDPTDLIKHFRKYH) adopts a C2H2-type 1; atypical zinc-finger fold. Residues 328–353 (FRCKFCNFTYLAKSATELEQHFLKTH) form a C2H2-type 2; atypical zinc finger. Residues 353 to 387 (HPNKMKMSSDSGKPSEKSTNKSSPIPRSCEPGDLG) are disordered. Residues 426–451 (YWCKFCSFSCESSSNSKLLEHHSKQH) form a C2H2-type 3; atypical zinc finger. The C2H2-type 4; atypical zinc-finger motif lies at 513 to 543 (YNCQFCDFRYSKSHGPEVILVGPLLRHYQQH). 3 C2H2-type zinc fingers span residues 604-627 (HQCD…ENAH), 656-679 (HSCT…RRVH), and 682-705 (YKCR…NSAH). Residues 843–877 (GVTAGASGEKSGQHTPQYPTAGDSKSKDESQSLLR) form a disordered region. Residues 886-910 (CANCLTTKTSLWRKNANGGYVCNAC) form a GATA-type zinc finger. Disordered stretches follow at residues 938–987 (RTRK…RENQ), 1031–1064 (SPQE…YMRP), and 1154–1196 (LDLA…EKSD). Residues 972-985 (IRSEDHSMEGHQRE) show a composition bias toward basic and acidic residues. Residues 1031-1049 (SPQESSGEPGNSSSVSDGK) show a composition bias toward low complexity. Basic and acidic residues-rich tracts occupy residues 1050-1062 (GSSE…EKYM) and 1170-1196 (DSKE…EKSD). The transcriptional repressor domain stretch occupies residues 1153-1271 (PLDLAMKHSR…QAEKNGKNKD (119 aa)). Glycyl lysine isopeptide (Lys-Gly) (interchain with G-Cter in SUMO) cross-links involve residues Lys1182 and Lys1191. C2H2-type zinc fingers lie at residues 1205 to 1227 (TKCV…MSCH) and 1233 to 1257 (FQCS…RGLH).

Binds specifically to GATA sequences. Sumoylated. Sumoylation in the repressor domain inhibits the transcription repression activity. Sumoylation on Lys-1191 is the major site. Appears to be sumoylated on multiple sites.

Its subcellular location is the nucleus. Transcriptional repressor. Represses expression of GATA-regulated genes at selected sites and stages in vertebrate development. This chain is Zinc finger transcription factor Trps1 (trps1), found in Xenopus laevis (African clawed frog).